The primary structure comprises 190 residues: Ribonuclease HII (190 aa).

Residues 3 to 190 (KLIAGVDEVG…KPVKALLEEK (188 aa)) form the RNase H type-2 domain. A divalent metal cation contacts are provided by Asp9, Glu10, and Asp101.

Belongs to the RNase HII family. Requires Mn(2+) as cofactor. Mg(2+) serves as cofactor.

Its subcellular location is the cytoplasm. It carries out the reaction Endonucleolytic cleavage to 5'-phosphomonoester.. Functionally, endonuclease that specifically degrades the RNA of RNA-DNA hybrids. The sequence is that of Ribonuclease HII from Alteromonas mediterranea (strain DSM 17117 / CIP 110805 / LMG 28347 / Deep ecotype).